The following is a 56-amino-acid chain: Large ribosomal subunit protein bL33c (56 aa).

It belongs to the bacterial ribosomal protein bL33 family.

The protein resides in the plastid. The protein localises to the chloroplast. The chain is Large ribosomal subunit protein bL33c from Rhodomonas salina (Cryptomonas salina).